We begin with the raw amino-acid sequence, 504 residues long: Glucose-6-phosphate isomerase (504 aa).

Glutamate 333 (proton donor) is an active-site residue. Catalysis depends on residues histidine 364 and lysine 473.

It belongs to the GPI family.

It is found in the cytoplasm. It carries out the reaction alpha-D-glucose 6-phosphate = beta-D-fructose 6-phosphate. Its pathway is carbohydrate biosynthesis; gluconeogenesis. It participates in carbohydrate degradation; glycolysis; D-glyceraldehyde 3-phosphate and glycerone phosphate from D-glucose: step 2/4. Catalyzes the reversible isomerization of glucose-6-phosphate to fructose-6-phosphate. This chain is Glucose-6-phosphate isomerase, found in Xanthomonas campestris pv. campestris (strain B100).